A 388-amino-acid chain; its full sequence is Lipid-A-disaccharide synthase (388 aa).

This sequence belongs to the LpxB family.

The enzyme catalyses a lipid X + a UDP-2-N,3-O-bis[(3R)-3-hydroxyacyl]-alpha-D-glucosamine = a lipid A disaccharide + UDP + H(+). Its pathway is bacterial outer membrane biogenesis; LPS lipid A biosynthesis. Functionally, condensation of UDP-2,3-diacylglucosamine and 2,3-diacylglucosamine-1-phosphate to form lipid A disaccharide, a precursor of lipid A, a phosphorylated glycolipid that anchors the lipopolysaccharide to the outer membrane of the cell. This chain is Lipid-A-disaccharide synthase, found in Burkholderia pseudomallei (strain 1710b).